A 485-amino-acid chain; its full sequence is Retron Mx162 reverse transcriptase (485 aa).

The disordered stretch occupies residues 1–33 (MTARLDPFVPAASPQAVPTPELTAPSSDAAAKR). Positions 167–407 (RWFAFHREVD…TRQRVTGLVV (241 aa)) constitute a Reverse transcriptase domain. 3 residues coordinate Mg(2+): D250, D346, and D347.

It belongs to the bacterial reverse transcriptase family.

The catalysed reaction is DNA(n) + a 2'-deoxyribonucleoside 5'-triphosphate = DNA(n+1) + diphosphate. With respect to regulation, msDNA synthesis is inhibited by rifampicin and chloramphenicol. In terms of biological role, reverse transcriptase (RT) responsible for synthesis of msDNA-Mx162 (a branched molecule with RNA linked by a 2',5'-phosphodiester bond to ssDNA). The retron transcript serves as primer (from a conserved internal G residue) and template for the reaction, and codes for the RT. The retron is involved in antiviral defense. This Myxococcus xanthus protein is Retron Mx162 reverse transcriptase.